We begin with the raw amino-acid sequence, 253 residues long: Phosphate import ATP-binding protein PstB (253 aa).

Positions 7–249 (ASAKNLNLWY…PQSSKTKRYI (243 aa)) constitute an ABC transporter domain. An ATP-binding site is contributed by 39–46 (GPSGCGKS).

It belongs to the ABC transporter superfamily. Phosphate importer (TC 3.A.1.7) family. The complex is composed of two ATP-binding proteins (PstB), two transmembrane proteins (PstC and PstA) and a solute-binding protein (PstS).

It localises to the cell inner membrane. The catalysed reaction is phosphate(out) + ATP + H2O = ADP + 2 phosphate(in) + H(+). In terms of biological role, part of the ABC transporter complex PstSACB involved in phosphate import. Responsible for energy coupling to the transport system. This chain is Phosphate import ATP-binding protein PstB, found in Ehrlichia ruminantium (strain Gardel).